Reading from the N-terminus, the 714-residue chain is Fatty acid oxidation complex subunit alpha (714 aa).

Residues 1–190 (MEMTSAFTLN…KLGLVDDVVP (190 aa)) are enoyl-CoA hydratase. Positions 306-714 (APLNSVGILG…FWKTTATDLQ (409 aa)) are 3-hydroxyacyl-CoA dehydrogenase.

It in the N-terminal section; belongs to the enoyl-CoA hydratase/isomerase family. This sequence in the central section; belongs to the 3-hydroxyacyl-CoA dehydrogenase family. In terms of assembly, heterotetramer of two alpha chains (FadJ) and two beta chains (FadI).

Its subcellular location is the cytoplasm. It catalyses the reaction a (3S)-3-hydroxyacyl-CoA = a (2E)-enoyl-CoA + H2O. The catalysed reaction is a 4-saturated-(3S)-3-hydroxyacyl-CoA = a (3E)-enoyl-CoA + H2O. It carries out the reaction a (3S)-3-hydroxyacyl-CoA + NAD(+) = a 3-oxoacyl-CoA + NADH + H(+). The enzyme catalyses (3S)-3-hydroxybutanoyl-CoA = (3R)-3-hydroxybutanoyl-CoA. Its pathway is lipid metabolism; fatty acid beta-oxidation. In terms of biological role, catalyzes the formation of a hydroxyacyl-CoA by addition of water on enoyl-CoA. Also exhibits 3-hydroxyacyl-CoA epimerase and 3-hydroxyacyl-CoA dehydrogenase activities. This chain is Fatty acid oxidation complex subunit alpha, found in Escherichia coli O8 (strain IAI1).